Consider the following 463-residue polypeptide: Type IV secretion system protein PtlD (463 aa).

The signal sequence occupies residues 1–24 (MAGLSRILLSCTLACLLAGQAAQA). Helical transmembrane passes span 118–138 (LQPL…YALL), 232–252 (WLLC…LAAS), 253–273 (LLIV…LFLV), 294–314 (ALVF…VLAG), and 333–353 (MLAA…VPLA). The span at 376 to 410 (AHRQAAARQYAPRPAAAAAAAGPHQAGTYAASATP) shows a compositional bias: low complexity. The interval 376–463 (AHRQAAARQY…RVLPRKPNLP (88 aa)) is disordered. Over residues 411-420 (APAPARPAPS) the composition is skewed to pro residues. Residues 441-455 (VRRDDRPAPAPDRRV) show a composition bias toward basic and acidic residues.

It localises to the cell membrane. Component of the type IV secretion system ptl required for secretion of assembled pertussis toxin (PTX) through the outer membrane. The polypeptide is Type IV secretion system protein PtlD (ptlD) (Bordetella pertussis (strain Tohama I / ATCC BAA-589 / NCTC 13251)).